The sequence spans 326 residues: MNPNYIILFFLVVAVIVLFYFVGSSVSLWIQALVSGARVGLLNIVFMRFRKVPPKLIVESKIMATKAGLDISSDELESHYLAGGNVSRVVQALIAADKAKIELSFNRSAAIDLAGRDVLEAVQMSVNPKVIETPMIAAMAKDGIQLKAISRVTVRANIDRLVGGAGEETILARVGEGIVTTIGSADSHKHVLENPDLISKRVLEKGLDSGTAFEILSIDIADVDVGKNIGAELETDRAEADKKIAQAKAEERRAMAYAREQEMKAQVEEMRAKVVEAEAKIPLAMANAFEKGNLGIMDYYRMKNIMADTQMRDTIGSPDRETPREK.

2 helical membrane passes run isoleucine 6–valine 26 and serine 27–methionine 47.

It belongs to the flotillin-like FloA family. In terms of assembly, homooligomerizes.

It localises to the cell membrane. The protein localises to the membrane raft. Found in functional membrane microdomains (FMM) that may be equivalent to eukaryotic membrane rafts. FMMs are highly dynamic and increase in number as cells age. Flotillins are thought to be important factors in membrane fluidity. In Desulfosudis oleivorans (strain DSM 6200 / JCM 39069 / Hxd3) (Desulfococcus oleovorans), this protein is Flotillin-like protein FloA.